A 410-amino-acid chain; its full sequence is MALVNEHFLKLPGSYLFSDIAKKVNTFKITHPKQDIIRLGIGDVTQPLPKACIEAMHKAVEELASKDTFRGYGPEQGYDFLIEAIIKNDFAPRGIHFSPSEIFVNDGAKSDTGNIGDILRHDNSVGVTDPIYPVYIDSNVMCGRAGVLEEGTGKWSNVTYMPCTSENDFIPEIPDKRIDIVYLCYPNNPTGTTLTKPELKKWVDYALANDTLILFDAAYEAYIQDADVPHSIYEIKGAKKCAIEFRSFSKTAGFTGVRCGYTVVPKELTAATLEGDRIPLNKLWNRRQCTKFNGTSYITQRAAEAVYSTEGKAQIKETINYYMSNAKIMKEGLEATGLKVYGGVNAPYLWVKTPNGLSSWRFFEQMLYEANVVGTPGVGFGPSGEGYIRLTAFGDHNDCMEAMRRIKNWL.

Substrate is bound by residues tyrosine 15 and glycine 42. Pyridoxal 5'-phosphate is bound by residues tyrosine 72, 108-109 (AK), tyrosine 132, asparagine 188, tyrosine 219, and 247-249 (SFS). Residues lysine 109, tyrosine 132, and asparagine 188 each contribute to the substrate site. Lysine 250 is subject to N6-(pyridoxal phosphate)lysine. 2 residues coordinate pyridoxal 5'-phosphate: arginine 258 and asparagine 293. Positions 293 and 389 each coordinate substrate.

It belongs to the class-I pyridoxal-phosphate-dependent aminotransferase family. LL-diaminopimelate aminotransferase subfamily. Homodimer. Requires pyridoxal 5'-phosphate as cofactor.

The catalysed reaction is (2S,6S)-2,6-diaminopimelate + 2-oxoglutarate = (S)-2,3,4,5-tetrahydrodipicolinate + L-glutamate + H2O + H(+). Its pathway is amino-acid biosynthesis; L-lysine biosynthesis via DAP pathway; LL-2,6-diaminopimelate from (S)-tetrahydrodipicolinate (aminotransferase route): step 1/1. Its function is as follows. Involved in the synthesis of meso-diaminopimelate (m-DAP or DL-DAP), required for both lysine and peptidoglycan biosynthesis. Catalyzes the direct conversion of tetrahydrodipicolinate to LL-diaminopimelate. This chain is LL-diaminopimelate aminotransferase, found in Bacteroides thetaiotaomicron (strain ATCC 29148 / DSM 2079 / JCM 5827 / CCUG 10774 / NCTC 10582 / VPI-5482 / E50).